A 937-amino-acid polypeptide reads, in one-letter code: Molybdenum cofactor sulfurase (937 aa).

Position 237 is an N6-(pyridoxal phosphate)lysine (K237). The active site involves C397. Disordered regions lie at residues 633–710 (GQGK…RRIL), 756–795 (PSPSTPSASPSNPLTPSPSPSTTSKPTPKPKQKPKQKLNP), and 897–921 (KEGTGMGMGTGTGTGTGTRSMGGNG). Residues 638–652 (MTRHAKAHLQRHQHQ) show a composition bias toward basic residues. Residues 682–935 (TPPSPPDSDT…VRVGDVVRPS (254 aa)) enclose the MOSC domain. Residues 756–767 (PSPSTPSASPSN) show a composition bias toward low complexity. Residues 900 to 921 (TGMGMGTGTGTGTGTRSMGGNG) show a composition bias toward gly residues.

Belongs to the class-V pyridoxal-phosphate-dependent aminotransferase family. MOCOS subfamily. Requires pyridoxal 5'-phosphate as cofactor.

It carries out the reaction Mo-molybdopterin + L-cysteine + AH2 = thio-Mo-molybdopterin + L-alanine + A + H2O. Its pathway is cofactor biosynthesis; molybdopterin biosynthesis. In terms of biological role, sulfurates the molybdenum cofactor. Sulfation of molybdenum is essential for xanthine dehydrogenase (XDH) and aldehyde oxidase (ADO) enzymes in which molybdenum cofactor is liganded by 1 oxygen and 1 sulfur atom in active form. The chain is Molybdenum cofactor sulfurase (nit-13) from Neurospora crassa (strain ATCC 24698 / 74-OR23-1A / CBS 708.71 / DSM 1257 / FGSC 987).